The chain runs to 979 residues: MRGARGAWDLLCVLLVLLRGQTATSQPSASPGEPSPPSIHPAQSELIVEAGDTLSLTCIDPDFVRWTFKTYFNEMVENKKNEWIQEKAEATRTGTYTCSNSNGLTSSIYVFVRDPAKLFLVGLPLFGKEDSDALVRCPLTDPQVSNYSLIECDGKSLPTDLTFVPNPKAGITIKNVKRAYHRLCVRCAAQRDGTWLHSDKFTLKVRAAIKAIPVVSVPETSHLLKKGDTFTVVCTIKDVSTSVNSMWLKMNPQPQHIAQVKHNSWHRGDFNYERQETLTISSARVDDSGVFMCYANNTFGSANVTTTLKVVEKGFINISPVKNTTVFVTDGENVDLVVEYEAYPKPEHQQWIYMNRTSANKGKDYVKSDNKSNIRYVNQLRLTRLKGTEGGTYTFLVSNSDASASVTFNVYVNTKPEILTYDRLINGMLQCVAEGFPEPTIDWYFCTGAEQRCTTPVSPVDVQVQNVSVSPFGKLVVQSSIDSSVFRHNGTVECKASNDVGKSSAFFNFAFKGNNKEQIQAHTLFTPLLIGFVVAAGAMGIIVMVLTYKYLQKPMYEVQWKVVEEINGNNYVYIDPTQLPYDHKWEFPRNRLSFGKTLGAGAFGKVVEATAYGLIKSDAAMTVAVKMLKPSAHLTEREALMSELKVLSYLGNHMNIVNLLGACTVGGPTLVITEYCCYGDLLNFLRRKRDSFIFSKQEEQAEAALYKNLLHSTEPSCDSSNEYMDMKPGVSYVVPTKTDKRRSARIDSYIERDVTPAIMEDDELALDLDDLLSFSYQVAKGMAFLASKNCIHRDLAARNILLTHGRITKICDFGLARDIRNDSNYVVKGNARLPVKWMAPESIFSCVYTFESDVWSYGIFLWELFSLGSSPYPGMPVDSKFYKMIKEGFRMVSPEHAPAEMYDVMKTCWDADPLKRPTFKQVVQLIEKQISDSTKHIYSNLANCNPNPENPVVVDHSVRVNSVGSSASSTQPLLVHEDA.

The first 24 residues, 1 to 24 (MRGARGAWDLLCVLLVLLRGQTAT), serve as a signal peptide directing secretion. The Extracellular portion of the chain corresponds to 25–527 (SQPSASPGEP…QIQAHTLFTP (503 aa)). Ig-like C2-type domains lie at 31–117 (PGEP…DPAK), 126–210 (FGKE…AAIK), and 217–315 (VPET…EKGF). 4 cysteine pairs are disulfide-bonded: Cys58/Cys98, Cys137/Cys187, Cys152/Cys184, and Cys234/Cys293. A glycan (N-linked (GlcNAc...) asparagine) is linked at Asn146. Asn296, Asn303, Asn323, Asn355, Asn370, Asn466, and Asn489 each carry an N-linked (GlcNAc...) asparagine glycan. 2 Ig-like C2-type domains span residues 324-417 (TTVF…TKPE) and 420-514 (TYDR…FKGN). Residues Cys431 and Cys494 are joined by a disulfide bond. The helical transmembrane segment at 528–548 (LLIGFVVAAGAMGIIVMVLTY) threads the bilayer. Residues 549–979 (KYLQKPMYEV…TQPLLVHEDA (431 aa)) are Cytoplasmic-facing. Phosphotyrosine; by autocatalysis is present on residues Tyr550 and Tyr556. Tyr571 provides a ligand contact to Mg(2+). Tyr571 and Tyr573 each carry phosphotyrosine. The tract at residues 571–573 (YVY) is important for interaction with phosphotyrosine-binding proteins. The Protein kinase domain maps to 592 to 939 (LSFGKTLGAG…ISDSTKHIYS (348 aa)). Residues 599 to 606 (GAGAFGKV), Lys626, and 674 to 680 (EYCCYGD) contribute to the ATP site. Tyr706 is modified (phosphotyrosine). Ser720 carries the post-translational modification Phosphoserine. Tyr723 and Tyr732 each carry phosphotyrosine; by autocatalysis. 2 positions are modified to phosphoserine; by PKC/PRKCA: Ser743 and Ser748. Catalysis depends on Asp794, which acts as the Proton acceptor. Arg798 contacts ATP. Asn799 and Asp812 together coordinate Mg(2+). Ser823 is subject to Phosphoserine. Position 825 is a phosphotyrosine; by autocatalysis (Tyr825). A Phosphoserine modification is found at Ser893. The residue at position 902 (Tyr902) is a Phosphotyrosine; by autocatalysis. The residue at position 938 (Tyr938) is a Phosphotyrosine. At Ser962 the chain carries Phosphoserine.

Belongs to the protein kinase superfamily. Tyr protein kinase family. CSF-1/PDGF receptor subfamily. As to quaternary structure, monomer in the absence of bound KITLG/SCF. Homodimer in the presence of bound KITLG/SCF, forming a heterotetramer with two KITLG/SCF molecules. Interacts (via phosphorylated tyrosine residues) with the adapter proteins GRB2 and GRB7 (via SH2 domain), and SH2B2/APS. Interacts (via C-terminus) with MPDZ (via the tenth PDZ domain). Interacts (via phosphorylated tyrosine residues) with the protein phosphatases PTPN6/SHP-1 (via SH2 domain), PTPN11/SHP-2 (via SH2 domain) and PTPRU. Interacts with DOK1 and TEC. Interacts with the protein kinase FES/FPS. Interacts with PLCG1. Interacts (via phosphorylated tyrosine residues) with PIK3R1 and PIK3 catalytic subunit. Interacts (KITLG/SCF-bound) with IL1RL1. Interacts with IL1RAP (independent of stimulation with KITLG/SCF). A mast cell-specific KITLG/SCF-induced interleukin-33 signaling complex contains IL1RL1, IL1RAP, KIT and MYD88. Post-translationally, ubiquitinated by SOCS6. KIT is rapidly ubiquitinated after autophosphorylation induced by KITLG/SCF binding, leading to internalization and degradation. In terms of processing, autophosphorylated on tyrosine residues. KITLG/SCF binding promotes autophosphorylation of isoform 1 and isoform 2. Isoform 1 shows low levels of tyrosine phosphorylation in the absence of added KITLG/SCF, while isoform 2 requires stimulation by KITLG/SCF for phosphorylation (in vitro). Phosphorylation of Tyr-573 is required for interaction with PTPN6/SHP-1. Phosphorylation of Tyr-571 is required for interaction with PTPN11/SHP-2. Phosphorylated tyrosine residues are important for interaction with specific binding partners. Isoform 1 and isoform 2 are detected in bone marrow cells, spermatogonia and spermatocytes, but not in round spermatids, elongating spermatids and spermatozoa. Isoform 3 is detected in round spermatids, elongating spermatids and spermatozoa, but not in spermatogonia and spermatocytes (at protein level). Isoform 1 is widely expressed and detected in fetal liver and bone marrow. Isoform 3 is detected in bone marrow cells enriched in hematopoietic stem cells.

The protein localises to the cell membrane. It localises to the cytoplasm. It carries out the reaction L-tyrosyl-[protein] + ATP = O-phospho-L-tyrosyl-[protein] + ADP + H(+). With respect to regulation, present in an inactive conformation in the absence of bound ligand. KITLG/SCF binding leads to dimerization and activation by autophosphorylation. Functionally, tyrosine-protein kinase that acts as a cell-surface receptor for the cytokine KITLG/SCF and plays an essential role in the regulation of cell survival and proliferation, hematopoiesis, stem cell maintenance, gametogenesis, mast cell development, migration and function, and in melanogenesis. In response to KITLG/SCF binding, KIT can activate several signaling pathways. Phosphorylates PIK3R1, PLCG1, SH2B2/APS and CBL. Activates the AKT1 signaling pathway by phosphorylation of PIK3R1, the regulatory subunit of phosphatidylinositol 3-kinase. Activated KIT also transmits signals via GRB2 and activation of RAS, RAF1 and the MAP kinases MAPK1/ERK2 and/or MAPK3/ERK1. Promotes activation of STAT family members STAT1, STAT3, STAT5A and STAT5B. Activation of PLCG1 leads to the production of the cellular signaling molecules diacylglycerol and inositol 1,4,5-trisphosphate. KIT signaling is modulated by protein phosphatases, and by rapid internalization and degradation of the receptor. Activated KIT promotes phosphorylation of the protein phosphatases PTPN6/SHP-1 and PTPRU, and of the transcription factors STAT1, STAT3, STAT5A and STAT5B. Promotes phosphorylation of PIK3R1, CBL, CRK (isoform Crk-II), LYN, MAPK1/ERK2 and/or MAPK3/ERK1, PLCG1, SRC and SHC1. This chain is Mast/stem cell growth factor receptor Kit (Kit), found in Mus musculus (Mouse).